We begin with the raw amino-acid sequence, 119 residues long: Flagellar transcriptional regulator FlhD (119 aa).

Belongs to the FlhD family. As to quaternary structure, homodimer; disulfide-linked. Forms a heterohexamer composed of two FlhC and four FlhD subunits. Each FlhC binds a FlhD dimer, forming a heterotrimer, and a hexamer assembles by dimerization of two heterotrimers.

The protein resides in the cytoplasm. Its function is as follows. Functions in complex with FlhC as a master transcriptional regulator that regulates transcription of several flagellar and non-flagellar operons by binding to their promoter region. Activates expression of class 2 flagellar genes, including fliA, which is a flagellum-specific sigma factor that turns on the class 3 genes. Also regulates genes whose products function in a variety of physiological pathways. This chain is Flagellar transcriptional regulator FlhD, found in Cronobacter sakazakii (strain ATCC BAA-894) (Enterobacter sakazakii).